We begin with the raw amino-acid sequence, 118 residues long: C-type natriuretic peptide 2 (118 aa).

Residues 1 to 22 (MHFCHIVGWGLVLAVLYLRTEA) form the signal peptide. Positions 23–96 (KPVAQAHQKS…SRKIKGINKK (74 aa)) are excised as a propeptide. The cysteines at positions 102 and 118 are disulfide-linked.

The protein belongs to the natriuretic peptide family.

The protein localises to the secreted. Exhibits natriuretic and vasodepressor activity. Has a cGMP-stimulating activity. This chain is C-type natriuretic peptide 2, found in Aquarana catesbeiana (American bullfrog).